The following is a 2528-amino-acid chain: Reducing polyketide synthase PKS1 (2528 aa).

A Ketosynthase family 3 (KS3) domain is found at 11–436 (ITPIAVVGMS…GANVHAILES (426 aa)). Catalysis depends on for beta-ketoacyl synthase activity residues Cys-186, His-321, and His-359. The interval 573–868 (FVFTGQGAQW…LGGPISQVID (296 aa)) is malonyl-CoA:ACP transacylase (MAT). Positions 954 to 1092 (LDLIGVFDVH…GLISVLKSSK (139 aa)) are N-terminal hotdog fold. Positions 954-1278 (LDLIGVFDVH…LVALDRPNSS (325 aa)) constitute a PKS/mFAS DH domain. Residues 956-1277 (LIGVFDVHSS…TLVALDRPNS (322 aa)) form a dehydratase (DH) domain region. His-986 serves as the catalytic Proton acceptor; for dehydratase activity. The interval 1122-1278 (KTEWDVKDMY…LVALDRPNSS (157 aa)) is C-terminal hotdog fold. Residue Asp-1187 is the Proton donor; for dehydratase activity of the active site. Residues 1827 to 2139 (GLLDSLHFTV…TGRHMGKMVA (313 aa)) form an enoyl reductase (ER) domain region. Positions 2164 to 2341 (ASYLLVGGVG…ATVIDIGAVH (178 aa)) are ketoreductase (KR) domain. The Carrier domain occupies 2442–2519 (SAVTIVLSAL…ALAVKIAARS (78 aa)). Position 2479 is an O-(pantetheine 4'-phosphoryl)serine (Ser-2479).

The protein operates within mycotoxin biosynthesis. Reducing polyketide synthase (PKS); part of the Tox1A locus, one of the 2 loci that mediate the biosynthesis of T-toxin, a family of linear polyketides 37 to 45 carbons in length, of which the major component is 41 carbons, and which leads to high virulence to maize. One of the PKSs (PKS1 or PKS2) could synthesize a precursor, used subsequently by the other PKS as starter unit, to add additional carbons. Variability in the length of the final carbon backbone C35-47 could be achieved by varying the number of condensation cycles, or use of different starter or extender units or might be due to decarboxylation of the penultimate product, catalyzed by DEC1. Additional proteins are required for the biosynthesis of T-toxin, including oxidoreductases RED1, RED2, RED3, LAM1 and OXI1, as well as esterase TOX9. The chain is Reducing polyketide synthase PKS1 from Cochliobolus heterostrophus (strain C4 / ATCC 48331 / race T) (Southern corn leaf blight fungus).